Consider the following 301-residue polypeptide: Immune-associated nucleotide-binding protein 5 (301 aa).

The 204-residue stretch at 11 to 214 (EPVRNIVLVG…FTEENDLNEK (204 aa)) folds into the AIG1-type G domain. The tract at residues 20–27 (GPTGNGKS) is G1. 20–28 (GPTGNGKSS) is a binding site for GTP. The G2 stretch occupies residues 46–50 (CKTCK). A G3 region spans residues 63–66 (DTPG). Positions 133-136 (TGGD) are G4. A G5 region spans residues 172 to 174 (NNK). Asn-173 serves as a coordination point for GTP.

The protein belongs to the TRAFAC class TrmE-Era-EngA-EngB-Septin-like GTPase superfamily. AIG1/Toc34/Toc159-like paraseptin GTPase family. IAN subfamily. In terms of tissue distribution, expressed in pollen, cotyledons and lateral roots.

The polypeptide is Immune-associated nucleotide-binding protein 5 (Arabidopsis thaliana (Mouse-ear cress)).